The chain runs to 187 residues: Protein GrpE (187 aa).

A disordered region spans residues 1 to 23 (MADEQNLDAQAQDQAAEAGAGEE). The segment covering 7–23 (LDAQAQDQAAEAGAGEE) has biased composition (low complexity).

The protein belongs to the GrpE family. Homodimer.

The protein localises to the cytoplasm. Functionally, participates actively in the response to hyperosmotic and heat shock by preventing the aggregation of stress-denatured proteins, in association with DnaK and GrpE. It is the nucleotide exchange factor for DnaK and may function as a thermosensor. Unfolded proteins bind initially to DnaJ; upon interaction with the DnaJ-bound protein, DnaK hydrolyzes its bound ATP, resulting in the formation of a stable complex. GrpE releases ADP from DnaK; ATP binding to DnaK triggers the release of the substrate protein, thus completing the reaction cycle. Several rounds of ATP-dependent interactions between DnaJ, DnaK and GrpE are required for fully efficient folding. The sequence is that of Protein GrpE from Pseudomonas savastanoi pv. phaseolicola (strain 1448A / Race 6) (Pseudomonas syringae pv. phaseolicola (strain 1448A / Race 6)).